The primary structure comprises 190 residues: GTP cyclohydrolase 1 (190 aa).

The Zn(2+) site is built by Cys-79, His-82, and Cys-151.

The protein belongs to the GTP cyclohydrolase I family. In terms of assembly, toroid-shaped homodecamer, composed of two pentamers of five dimers.

It catalyses the reaction GTP + H2O = 7,8-dihydroneopterin 3'-triphosphate + formate + H(+). It functions in the pathway cofactor biosynthesis; 7,8-dihydroneopterin triphosphate biosynthesis; 7,8-dihydroneopterin triphosphate from GTP: step 1/1. The chain is GTP cyclohydrolase 1 from Clostridioides difficile (strain 630) (Peptoclostridium difficile).